Here is a 202-residue protein sequence, read N- to C-terminus: Transcriptional regulator SdrP (202 aa).

The HTH crp-type domain occupies Q117–K189. Residues H149 to G168 constitute a DNA-binding region (H-T-H motif).

As to quaternary structure, homodimer.

Functionally, activates transcription. The consensus DNA-binding site of this transcriptional regulator is 5'-WWGTGAN(5-7)ACACWW-3' in which W is A or T and N is G, A, T or C. Regulated genes include those encoding proteins involved in nutrient and energy supply, redox control and polyadenylation of mRNA. Also regulates genes involved in oxidative stress response such as genes encoding manganese superoxide dismutase and catalase, and genes encoding a protein involved in nucleotide excision repair of damaged DNA and putative proteins involved in redox control, protein degradation and transcriptional regulation. This Thermus thermophilus (strain ATCC 27634 / DSM 579 / HB8) protein is Transcriptional regulator SdrP.